The primary structure comprises 321 residues: ATP-dependent 6-phosphofructokinase (321 aa).

Gly-12 contacts ATP. ADP contacts are provided by residues Arg-22–Arg-26 and Arg-55–Asp-60. Residues Arg-73–Phe-74 and Gly-103–Ser-106 each bind ATP. Residue Asp-104 coordinates Mg(2+). Thr-127–Asp-129 lines the substrate pocket. Residue Asp-129 is the Proton acceptor of the active site. ADP is bound at residue Arg-156. Substrate contacts are provided by residues Arg-164 and Met-171–Arg-173. ADP contacts are provided by residues Gly-187 to Glu-189, Lys-213, and Lys-215 to His-217. Residues Glu-224, Arg-245, and His-251 to Arg-254 each bind substrate.

It belongs to the phosphofructokinase type A (PFKA) family. ATP-dependent PFK group I subfamily. Prokaryotic clade 'B1' sub-subfamily. In terms of assembly, homotetramer. Mg(2+) serves as cofactor.

Its subcellular location is the cytoplasm. It catalyses the reaction beta-D-fructose 6-phosphate + ATP = beta-D-fructose 1,6-bisphosphate + ADP + H(+). It participates in carbohydrate degradation; glycolysis; D-glyceraldehyde 3-phosphate and glycerone phosphate from D-glucose: step 3/4. Its activity is regulated as follows. Allosterically activated by ADP and other diphosphonucleosides, and allosterically inhibited by phosphoenolpyruvate. Functionally, catalyzes the phosphorylation of D-fructose 6-phosphate to fructose 1,6-bisphosphate by ATP, the first committing step of glycolysis. The sequence is that of ATP-dependent 6-phosphofructokinase from Histophilus somni (strain 129Pt) (Haemophilus somnus).